Consider the following 361-residue polypeptide: Phosphate acyltransferase (361 aa).

Positions 340 to 361 (VPADGAATEQGPTPRRIAPPRT) are disordered.

The protein belongs to the PlsX family. As to quaternary structure, homodimer. Probably interacts with PlsY.

Its subcellular location is the cytoplasm. It carries out the reaction a fatty acyl-[ACP] + phosphate = an acyl phosphate + holo-[ACP]. It participates in lipid metabolism; phospholipid metabolism. Its function is as follows. Catalyzes the reversible formation of acyl-phosphate (acyl-PO(4)) from acyl-[acyl-carrier-protein] (acyl-ACP). This enzyme utilizes acyl-ACP as fatty acyl donor, but not acyl-CoA. The polypeptide is Phosphate acyltransferase (Anaeromyxobacter dehalogenans (strain 2CP-1 / ATCC BAA-258)).